Here is a 100-residue protein sequence, read N- to C-terminus: Large ribosomal subunit protein bL28 (100 aa).

The protein belongs to the bacterial ribosomal protein bL28 family.

In Methylobacterium radiotolerans (strain ATCC 27329 / DSM 1819 / JCM 2831 / NBRC 15690 / NCIMB 10815 / 0-1), this protein is Large ribosomal subunit protein bL28.